The primary structure comprises 201 residues: Phosphoheptose isomerase (201 aa).

Residues 36–195 form the SIS domain; the sequence is IAKSLNEGGK…EDILFEIPAA (160 aa). 51-53 serves as a coordination point for substrate; sequence NGG. 2 residues coordinate Zn(2+): His-60 and Glu-64. Residues Glu-64, 93–94, 119–121, Ser-124, and Gln-171 each bind substrate; these read ND and STS. 2 residues coordinate Zn(2+): Gln-171 and His-179.

The protein belongs to the SIS family. GmhA subfamily. The cofactor is Zn(2+).

The protein localises to the cytoplasm. The enzyme catalyses 2 D-sedoheptulose 7-phosphate = D-glycero-alpha-D-manno-heptose 7-phosphate + D-glycero-beta-D-manno-heptose 7-phosphate. It participates in carbohydrate biosynthesis; D-glycero-D-manno-heptose 7-phosphate biosynthesis; D-glycero-alpha-D-manno-heptose 7-phosphate and D-glycero-beta-D-manno-heptose 7-phosphate from sedoheptulose 7-phosphate: step 1/1. Functionally, catalyzes the isomerization of sedoheptulose 7-phosphate in D-glycero-D-manno-heptose 7-phosphate. The sequence is that of Phosphoheptose isomerase from Thermodesulfovibrio yellowstonii (strain ATCC 51303 / DSM 11347 / YP87).